An 88-amino-acid polypeptide reads, in one-letter code: Small ribosomal subunit protein bS16 (88 aa).

This sequence belongs to the bacterial ribosomal protein bS16 family.

In Anaeromyxobacter dehalogenans (strain 2CP-1 / ATCC BAA-258), this protein is Small ribosomal subunit protein bS16.